A 505-amino-acid polypeptide reads, in one-letter code: Maturase K (505 aa).

This sequence belongs to the intron maturase 2 family. MatK subfamily.

The protein localises to the plastid. The protein resides in the chloroplast. Functionally, usually encoded in the trnK tRNA gene intron. Probably assists in splicing its own and other chloroplast group II introns. In Physcomitrium patens (Spreading-leaved earth moss), this protein is Maturase K.